Here is a 322-residue protein sequence, read N- to C-terminus: tRNA U34 carboxymethyltransferase (322 aa).

Residues lysine 92, tryptophan 106, lysine 111, glycine 131, 153-155, 181-182, methionine 196, tyrosine 200, and arginine 315 contribute to the carboxy-S-adenosyl-L-methionine site; these read DPS and VE.

This sequence belongs to the class I-like SAM-binding methyltransferase superfamily. CmoB family. As to quaternary structure, homotetramer.

It catalyses the reaction carboxy-S-adenosyl-L-methionine + 5-hydroxyuridine(34) in tRNA = 5-carboxymethoxyuridine(34) in tRNA + S-adenosyl-L-homocysteine + H(+). Its function is as follows. Catalyzes carboxymethyl transfer from carboxy-S-adenosyl-L-methionine (Cx-SAM) to 5-hydroxyuridine (ho5U) to form 5-carboxymethoxyuridine (cmo5U) at position 34 in tRNAs. The polypeptide is tRNA U34 carboxymethyltransferase (Pseudoalteromonas translucida (strain TAC 125)).